Reading from the N-terminus, the 447-residue chain is FAD-dependent monooxygenase tropB (447 aa).

A helical membrane pass occupies residues 12-32 (PLSVGIVGGGIIGVILAAGLV). Positions 42, 55, and 124 each coordinate FAD. N-linked (GlcNAc...) asparagine glycosylation occurs at Asn153. Catalysis depends on residues Arg206 and Tyr239. Asn243 is a glycosylation site (N-linked (GlcNAc...) asparagine). FAD contacts are provided by Asp322 and Ala335.

It belongs to the paxM FAD-dependent monooxygenase family. The cofactor is FAD.

Its subcellular location is the membrane. It functions in the pathway secondary metabolite biosynthesis. In terms of biological role, FAD-dependent monooxygenase; part of the gene cluster that mediates the biosynthesis of the tropolone class of fungal maleic anhydrides. Within the pathway, tropB catalyzes a synthetically challenging asymmetric oxidative dearomatization reaction to convert 3-methylorcinaldehyde into a hydroxycyclohexadione. The pathway begins with the synthesis of 3-methylorcinaldehyde by the non-reducing polyketide synthase (PKS) tropA. 3-methylorcinaldehyde is the substrate for the FAD-dependent monooxygenase tropB to yield a dearomatized hydroxycyclohexadione. The 2-oxoglutarate-dependent dioxygenase tropC then performs the oxidative ring expansion to provide the first tropolone metabolite stipitaldehyde. Trop D converts stipitaldehyde into stipitacetal which is in turn converted to stipitalide by the short-chain dehydrogenase/reductase tropE. The next steps involve tropF, tropG, tropH, tropI and tropJ to form successive tropolone maleic anhydrides including stipitaldehydic, stipitatonic and stipitatic acids. In Talaromyces stipitatus (strain ATCC 10500 / CBS 375.48 / QM 6759 / NRRL 1006) (Penicillium stipitatum), this protein is FAD-dependent monooxygenase tropB.